The sequence spans 421 residues: Testin (421 aa).

Positions Met92–Asp199 constitute a PET domain. Residues Glu133–Cys164 are disordered. Over residues Pro155–Cys164 the composition is skewed to basic and acidic residues. 3 consecutive LIM zinc-binding domains span residues Tyr234 to Glu297, Pro299 to Val359, and Gln362 to Ser421.

The protein belongs to the prickle / espinas / testin family. As to quaternary structure, interacts via LIM domain 1 with ZYX. Interacts (via LIM domain 3) with ENAH and VASP. Interacts with ALKBH4, talin, actin, alpha-actinin, GRIP1 and PXN. Interacts (via LIM domain 2) with ACTL7A (via N-terminus). Heterodimer with ACTL7A; the heterodimer interacts with ENAH to form a heterotrimer.

Its subcellular location is the cytoplasm. It localises to the cell junction. It is found in the focal adhesion. Functionally, scaffold protein that may play a role in cell adhesion, cell spreading and in the reorganization of the actin cytoskeleton. Plays a role in the regulation of cell proliferation. May act as a tumor suppressor. The sequence is that of Testin (TES) from Aotus nancymaae (Ma's night monkey).